A 1267-amino-acid chain; its full sequence is Probable ATP-dependent RNA helicase DHR1 (1267 aa).

Disordered stretches follow at residues 1–67 (MGTY…EPLT), 168–233 (YEPK…SNIK), and 255–313 (EELK…DQND). Basic and acidic residues-rich tracts occupy residues 7 to 25 (RFNEKARSGHMAKLKELKR) and 32 to 43 (TRQDENDERVEN). Residues 175–192 (EYGEGGSSEDDDGEDDFE) show a composition bias toward acidic residues. The residue at position 181 (Ser181) is a Phosphoserine. The span at 202 to 217 (TDNEEKKSSGFIDHRP) shows a compositional bias: basic and acidic residues. The span at 264 to 284 (DEMDFDTTSEDDDEEEDQEEE) shows a compositional bias: acidic residues. Residues 401 to 580 (MEAIHHNDVV…KTLFPIAPPV (180 aa)) enclose the Helicase ATP-binding domain. 414–421 (GETGSGKT) is a binding site for ATP. Positions 516 to 519 (DEAH) match the DEAH box motif. The 184-residue stretch at 675 to 858 (DIDFSVQVID…SIVLQMKSMA (184 aa)) folds into the Helicase C-terminal domain. 2 disordered regions span residues 693–720 (RYEEDEGNSGNGEDEEDEEEEGFEEVLT) and 955–976 (PNPDENLDDKIREHDESTPGMD). The span at 695 to 719 (EEDEGNSGNGEDEEDEEEEGFEEVL) shows a compositional bias: acidic residues.

This sequence belongs to the DEAD box helicase family. DEAH subfamily. As to quaternary structure, interacts with snoRNA U3. Component of the ribosomal small subunit (SSU) processome composed of at least 40 protein subunits and snoRNA U3.

It is found in the nucleus. Its subcellular location is the nucleolus. The catalysed reaction is ATP + H2O = ADP + phosphate + H(+). In terms of biological role, probable ATP-binding RNA helicase. Required for 18S rRNA synthesis. May play a role in restructuring of the pre-rRNA. This chain is Probable ATP-dependent RNA helicase DHR1 (ECM16), found in Saccharomyces cerevisiae (strain ATCC 204508 / S288c) (Baker's yeast).